The following is a 61-amino-acid chain: Large ribosomal subunit protein uL30 (61 aa).

It belongs to the universal ribosomal protein uL30 family. Part of the 50S ribosomal subunit.

The polypeptide is Large ribosomal subunit protein uL30 (Fervidobacterium nodosum (strain ATCC 35602 / DSM 5306 / Rt17-B1)).